The chain runs to 86 residues: Cytochrome c oxidase subunit 6B1 (86 aa).

Residue Ala-2 is modified to N-acetylalanine. Positions 27–73 constitute a CHCH domain; the sequence is TRNCWQNYLDFHRCEKAMTAKGGDVSVCEWYRRVYKSLCPISWVSTW. Residues 30–40 carry the Cx9C motif motif; sequence CWQNYLDFHRC. 2 disulfide bridges follow: Cys-30–Cys-65 and Cys-40–Cys-54. Residues 54–65 carry the Cx10C motif motif; that stretch reads CEWYRRVYKSLC. N6-acetyllysine is present on Lys-62.

It belongs to the cytochrome c oxidase subunit 6B family. As to quaternary structure, component of the cytochrome c oxidase (complex IV, CIV), a multisubunit enzyme composed of 14 subunits. The complex is composed of a catalytic core of 3 subunits MT-CO1, MT-CO2 and MT-CO3, encoded in the mitochondrial DNA, and 11 supernumerary subunits COX4I, COX5A, COX5B, COX6A, COX6B, COX6C, COX7A, COX7B, COX7C, COX8 and NDUFA4, which are encoded in the nuclear genome. The complex exists as a monomer or a dimer and forms supercomplexes (SCs) in the inner mitochondrial membrane with NADH-ubiquinone oxidoreductase (complex I, CI) and ubiquinol-cytochrome c oxidoreductase (cytochrome b-c1 complex, complex III, CIII), resulting in different assemblies (supercomplex SCI(1)III(2)IV(1) and megacomplex MCI(2)III(2)IV(2)).

It localises to the mitochondrion inner membrane. Its pathway is energy metabolism; oxidative phosphorylation. In terms of biological role, component of the cytochrome c oxidase, the last enzyme in the mitochondrial electron transport chain which drives oxidative phosphorylation. The respiratory chain contains 3 multisubunit complexes succinate dehydrogenase (complex II, CII), ubiquinol-cytochrome c oxidoreductase (cytochrome b-c1 complex, complex III, CIII) and cytochrome c oxidase (complex IV, CIV), that cooperate to transfer electrons derived from NADH and succinate to molecular oxygen, creating an electrochemical gradient over the inner membrane that drives transmembrane transport and the ATP synthase. Cytochrome c oxidase is the component of the respiratory chain that catalyzes the reduction of oxygen to water. Electrons originating from reduced cytochrome c in the intermembrane space (IMS) are transferred via the dinuclear copper A center (CU(A)) of subunit 2 and heme A of subunit 1 to the active site in subunit 1, a binuclear center (BNC) formed by heme A3 and copper B (CU(B)). The BNC reduces molecular oxygen to 2 water molecules using 4 electrons from cytochrome c in the IMS and 4 protons from the mitochondrial matrix. In Carlito syrichta (Philippine tarsier), this protein is Cytochrome c oxidase subunit 6B1 (COX6B1).